The primary structure comprises 169 residues: GTP-dependent dephospho-CoA kinase (169 aa).

4 residues coordinate GTP: Asp-45, Asp-64, Lys-66, and Glu-121.

Belongs to the GTP-dependent DPCK family.

The catalysed reaction is 3'-dephospho-CoA + GTP = GDP + CoA + H(+). It functions in the pathway cofactor biosynthesis; coenzyme A biosynthesis. Functionally, catalyzes the GTP-dependent phosphorylation of the 3'-hydroxyl group of dephosphocoenzyme A to form coenzyme A (CoA). This Methanosphaera stadtmanae (strain ATCC 43021 / DSM 3091 / JCM 11832 / MCB-3) protein is GTP-dependent dephospho-CoA kinase.